Here is a 276-residue protein sequence, read N- to C-terminus: MLMITSFANPRVAQAFVDYMATQGVILTIQQHNQSDVWLADESQAERVRAELARFLGNPADPRYLAASWQSGHTDSGLHYRRYPFFAALRERAGPVTWVMMIACVVVFIAMQILGDQEVMLWLAWPFDPTLKFEFWRYFTHALMHFSLMHILFNLLWWWYLGGAVEKRLGSGKLIVITLISALLSGYVQQKFSGPWFGGLSGVVYALMGYVWLRGERDPQSGIYLQRGLIIFALIWIVAGWFDLFGMSMANGAHIAGLAVGLAMAFVDSLNARKRK.

The next 6 helical transmembrane spans lie at glycine 94–leucine 114, alanine 142–glycine 162, leucine 169–glutamine 189, phenylalanine 192–tryptophan 212, leucine 229–methionine 249, and alanine 250–leucine 270. The Nucleophile role is filled by serine 201. The active site involves histidine 254.

This sequence belongs to the peptidase S54 family.

It localises to the cell inner membrane. The catalysed reaction is Cleaves type-1 transmembrane domains using a catalytic dyad composed of serine and histidine that are contributed by different transmembrane domains.. In terms of biological role, rhomboid-type serine protease that catalyzes intramembrane proteolysis. In Escherichia coli O81 (strain ED1a), this protein is Rhomboid protease GlpG.